Reading from the N-terminus, the 101-residue chain is Small ribosomal subunit protein uS14 (101 aa).

The protein belongs to the universal ribosomal protein uS14 family. As to quaternary structure, part of the 30S ribosomal subunit. Contacts proteins S3 and S10.

Functionally, binds 16S rRNA, required for the assembly of 30S particles and may also be responsible for determining the conformation of the 16S rRNA at the A site. The chain is Small ribosomal subunit protein uS14 from Chlamydia abortus (strain DSM 27085 / S26/3) (Chlamydophila abortus).